The chain runs to 197 residues: Secreted RxLR effector protein 48 (197 aa).

An N-terminal signal peptide occupies residues 1-27 (MCCVSWNWVLACTFLLIFLSWWNCCND). The RxLR-dEER motif lies at 58–79 (RLLRVNLAANAEVLTHEIEEEK).

Belongs to the RxLR effector family.

The protein localises to the secreted. It is found in the host nucleus. It localises to the host cytoplasm. In terms of biological role, secreted effector that completely suppresses the host cell death induced by cell death-inducing proteins. The chain is Secreted RxLR effector protein 48 from Plasmopara viticola (Downy mildew of grapevine).